The following is a 172-amino-acid chain: Ubiquitin-conjugating enzyme E2 PEX4 (172 aa).

The region spanning 14–167 (SASKRLIKEL…VELWCQDSDS (154 aa)) is the UBC core domain. Cys-104 functions as the Glycyl thioester intermediate in the catalytic mechanism.

The protein belongs to the ubiquitin-conjugating enzyme family.

It catalyses the reaction S-ubiquitinyl-[E1 ubiquitin-activating enzyme]-L-cysteine + [E2 ubiquitin-conjugating enzyme]-L-cysteine = [E1 ubiquitin-activating enzyme]-L-cysteine + S-ubiquitinyl-[E2 ubiquitin-conjugating enzyme]-L-cysteine.. The protein operates within protein modification; protein ubiquitination. Functionally, ubiquitin-conjugating enzyme E2 that is essential for peroxisome biogenesis and plays a key role in development, pathogenicity, and cell wall integrity. Required for long and very long-chain fatty acid utilization and is involved in lipid droplet accumulation and the elimination of reactive oxygen species. Controls the expression of proteins involved in protein biosynthesis, fatty acid metabolism, cell wall synthesis, oxidation-reduction reactions, as well as of the enzymes involved in the biosynthesis of the mycotoxin deoxynivalenol (DON), including TRI5, TRI6, and TRI10. The protein is Ubiquitin-conjugating enzyme E2 PEX4 of Gibberella zeae (strain ATCC MYA-4620 / CBS 123657 / FGSC 9075 / NRRL 31084 / PH-1) (Wheat head blight fungus).